Consider the following 354-residue polypeptide: S-adenosylmethionine:tRNA ribosyltransferase-isomerase (354 aa).

This sequence belongs to the QueA family. As to quaternary structure, monomer.

It localises to the cytoplasm. It catalyses the reaction 7-aminomethyl-7-carbaguanosine(34) in tRNA + S-adenosyl-L-methionine = epoxyqueuosine(34) in tRNA + adenine + L-methionine + 2 H(+). Its pathway is tRNA modification; tRNA-queuosine biosynthesis. Functionally, transfers and isomerizes the ribose moiety from AdoMet to the 7-aminomethyl group of 7-deazaguanine (preQ1-tRNA) to give epoxyqueuosine (oQ-tRNA). The protein is S-adenosylmethionine:tRNA ribosyltransferase-isomerase of Salmonella paratyphi C (strain RKS4594).